The primary structure comprises 200 residues: MFGAICAGRLVQTNLQQVADNQFVFQLDSAESLNHIVVFLLPNSPFPVGMGAKVYFQWPGKPFQFLGYLTNEKPSAIFRLKNTIQTLSENENCVGITAMLGISVEPLTNFTETPAVSTSASNVIAKPLPPVTSVAQKILTNLYNFLASFATSQLPPNSIGLGDLRPNDTFIPLRVFQDWHAKFLNKLSNNPNFLDSEDQI.

Belongs to the OPI10 family.

The protein localises to the cytoplasm. Its subcellular location is the nucleus envelope. The polypeptide is Protein OPI10 homolog (Schizosaccharomyces pombe (strain 972 / ATCC 24843) (Fission yeast)).